Consider the following 485-residue polypeptide: NADH-quinone oxidoreductase subunit N (485 aa).

A run of 14 helical transmembrane segments spans residues 8 to 28 (LIAL…MLSI), 35 to 55 (FLNA…LWFV), 75 to 95 (LYTG…YPWL), 105 to 125 (FYLL…ANHL), 127 to 147 (SLFL…GYAF), 159 to 179 (YTIL…LVYA), 203 to 223 (LLAG…LVPF), 235 to 255 (PAPV…GVVM), 271 to 291 (VVLG…ALTQ), 297 to 317 (LLGY…IALK), 326 to 346 (VGVY…VVSL), 374 to 394 (AVMT…GFIG), 408 to 427 (WWLT…YYLR), and 455 to 475 (VVVL…QPLI).

It belongs to the complex I subunit 2 family. As to quaternary structure, NDH-1 is composed of 13 different subunits. Subunits NuoA, H, J, K, L, M, N constitute the membrane sector of the complex.

The protein resides in the cell inner membrane. The catalysed reaction is a quinone + NADH + 5 H(+)(in) = a quinol + NAD(+) + 4 H(+)(out). Functionally, NDH-1 shuttles electrons from NADH, via FMN and iron-sulfur (Fe-S) centers, to quinones in the respiratory chain. The immediate electron acceptor for the enzyme in this species is believed to be ubiquinone. Couples the redox reaction to proton translocation (for every two electrons transferred, four hydrogen ions are translocated across the cytoplasmic membrane), and thus conserves the redox energy in a proton gradient. In Cronobacter sakazakii (strain ATCC BAA-894) (Enterobacter sakazakii), this protein is NADH-quinone oxidoreductase subunit N.